Consider the following 216-residue polypeptide: MPTVLLTGFEPFEDEPINPSWEAVRALDGERVGDAVIVARQLPCVFGAAIDAIGELLDTLRPALVIAVGQAGGRAEMSVERVAINVDDARIADNAGAQPIDTAIVADGPAAYFATLPIKAMVRDMRAAGVPASVSQTAGTFVCNHVFYGLMHRLARHPAGTVRGGFIHIPYLPEQAARHPGQPSLALETLVKGLRTAVATALSTRADVREQGGQLH.

Catalysis depends on residues Glu-80, Cys-143, and His-168.

The protein belongs to the peptidase C15 family. Homotetramer.

The protein localises to the cytoplasm. It catalyses the reaction Release of an N-terminal pyroglutamyl group from a polypeptide, the second amino acid generally not being Pro.. Removes 5-oxoproline from various penultimate amino acid residues except L-proline. This Cupriavidus taiwanensis (strain DSM 17343 / BCRC 17206 / CCUG 44338 / CIP 107171 / LMG 19424 / R1) (Ralstonia taiwanensis (strain LMG 19424)) protein is Pyrrolidone-carboxylate peptidase.